The chain runs to 196 residues: ATP-dependent Clp protease proteolytic subunit (196 aa).

Catalysis depends on serine 101, which acts as the Nucleophile. Histidine 126 is a catalytic residue.

Belongs to the peptidase S14 family. As to quaternary structure, component of the chloroplastic Clp protease core complex.

Its subcellular location is the plastid. It localises to the chloroplast stroma. It catalyses the reaction Hydrolysis of proteins to small peptides in the presence of ATP and magnesium. alpha-casein is the usual test substrate. In the absence of ATP, only oligopeptides shorter than five residues are hydrolyzed (such as succinyl-Leu-Tyr-|-NHMec, and Leu-Tyr-Leu-|-Tyr-Trp, in which cleavage of the -Tyr-|-Leu- and -Tyr-|-Trp bonds also occurs).. Functionally, cleaves peptides in various proteins in a process that requires ATP hydrolysis. Has a chymotrypsin-like activity. Plays a major role in the degradation of misfolded proteins. The chain is ATP-dependent Clp protease proteolytic subunit from Lepidium virginicum (Virginia pepperweed).